The sequence spans 287 residues: Membrane protein insertase YidC 2 (287 aa).

Residues 1-26 (MKKKKRFKQKLLIASLVIGLVAVLSG) form the signal peptide. The N-palmitoyl cysteine moiety is linked to residue Cys27. The S-diacylglycerol cysteine moiety is linked to residue Cys27. The next 5 membrane-spanning stretches (helical) occupy residues 65-85 (YAVGIIVVTILIRLLIMPLMI), 135-155 (MMGCLPLLIQMPILLGFYQAI), 178-198 (YILPIVAALTTFLSSKISMMG), 207-224 (AMIVYIMPVMILFMGITL), and 228-250 (LALYWIIGNIFTVFQTLLINNPF).

The protein belongs to the OXA1/ALB3/YidC family. Type 2 subfamily.

It localises to the cell membrane. Its function is as follows. Required for the insertion and/or proper folding and/or complex formation of integral membrane proteins into the membrane. Involved in integration of membrane proteins that insert both dependently and independently of the Sec translocase complex, as well as at least some lipoproteins. The polypeptide is Membrane protein insertase YidC 2 (Listeria innocua serovar 6a (strain ATCC BAA-680 / CLIP 11262)).